The following is a 116-amino-acid chain: Small ribosomal subunit protein uS11m (116 aa).

It belongs to the universal ribosomal protein uS11 family.

The protein localises to the mitochondrion. In Chondrus crispus (Carrageen Irish moss), this protein is Small ribosomal subunit protein uS11m (RPS11).